Reading from the N-terminus, the 420-residue chain is Protein BDLF2 (420 aa).

Disordered stretches follow at residues 1 to 21 (MVDEQVAVEHGTVSHTISREE) and 64 to 129 (AAAV…GGQR). The Intravirion portion of the chain corresponds to 1–184 (MVDEQVAVEH…AETLAEPPRC (184 aa)). Positions 92-108 (TNTQDQNQNQTTRARTN) are enriched in low complexity. A helical; Signal-anchor for type II membrane protein membrane pass occupies residues 185–205 (FMLSFVFIYYCCYLAFLALLA). The Virion surface segment spans residues 206 to 420 (FGFNPLFLPS…LEEVMYVMVQ (215 aa)). N-linked (GlcNAc...) asparagine; by host glycans are attached at residues Asn-258, Asn-264, Asn-300, Asn-304, Asn-371, and Asn-384.

Belongs to the herpesviridae BDLF2 family. Interacts with BMRF2.

The protein resides in the virion membrane. Functionally, rearranges cellular actin to increase intercellular contacts and thereby promote virus cell-to-cell spreading. Induce the outgrowth of long, branched plasma membrane fronds to create intercellular network for virion traffic. The fronds are actin based and RhoA-dependent. The polypeptide is Protein BDLF2 (Epstein-Barr virus (strain GD1) (HHV-4)).